A 226-amino-acid polypeptide reads, in one-letter code: Phosphoribosylformylglycinamidine synthase subunit PurQ (226 aa).

Residues 2 to 225 enclose the Glutamine amidotransferase type-1 domain; sequence RFGIVVFPGS…MHYLEGGKNN (224 aa). Cys86 functions as the Nucleophile in the catalytic mechanism. Residues His194 and Glu196 contribute to the active site.

Part of the FGAM synthase complex composed of 1 PurL, 1 PurQ and 2 PurS subunits.

It localises to the cytoplasm. It catalyses the reaction N(2)-formyl-N(1)-(5-phospho-beta-D-ribosyl)glycinamide + L-glutamine + ATP + H2O = 2-formamido-N(1)-(5-O-phospho-beta-D-ribosyl)acetamidine + L-glutamate + ADP + phosphate + H(+). The enzyme catalyses L-glutamine + H2O = L-glutamate + NH4(+). It participates in purine metabolism; IMP biosynthesis via de novo pathway; 5-amino-1-(5-phospho-D-ribosyl)imidazole from N(2)-formyl-N(1)-(5-phospho-D-ribosyl)glycinamide: step 1/2. In terms of biological role, part of the phosphoribosylformylglycinamidine synthase complex involved in the purines biosynthetic pathway. Catalyzes the ATP-dependent conversion of formylglycinamide ribonucleotide (FGAR) and glutamine to yield formylglycinamidine ribonucleotide (FGAM) and glutamate. The FGAM synthase complex is composed of three subunits. PurQ produces an ammonia molecule by converting glutamine to glutamate. PurL transfers the ammonia molecule to FGAR to form FGAM in an ATP-dependent manner. PurS interacts with PurQ and PurL and is thought to assist in the transfer of the ammonia molecule from PurQ to PurL. The chain is Phosphoribosylformylglycinamidine synthase subunit PurQ from Alkaliphilus metalliredigens (strain QYMF).